A 382-amino-acid chain; its full sequence is Chorismate synthase (382 aa).

The NADP(+) site is built by arginine 39 and arginine 45. A disordered region spans residues 89 to 113 (SPEPGGEPRKKALTDARPGHADLTG). Basic and acidic residues predominate over residues 94-108 (GEPRKKALTDARPGH). FMN contacts are provided by residues 128–130 (RAS), 246–247 (QA), alanine 290, 305–309 (KPIAT), and arginine 331.

This sequence belongs to the chorismate synthase family. Homotetramer. It depends on FMNH2 as a cofactor.

The catalysed reaction is 5-O-(1-carboxyvinyl)-3-phosphoshikimate = chorismate + phosphate. Its pathway is metabolic intermediate biosynthesis; chorismate biosynthesis; chorismate from D-erythrose 4-phosphate and phosphoenolpyruvate: step 7/7. Functionally, catalyzes the anti-1,4-elimination of the C-3 phosphate and the C-6 proR hydrogen from 5-enolpyruvylshikimate-3-phosphate (EPSP) to yield chorismate, which is the branch point compound that serves as the starting substrate for the three terminal pathways of aromatic amino acid biosynthesis. This reaction introduces a second double bond into the aromatic ring system. This chain is Chorismate synthase, found in Deinococcus radiodurans (strain ATCC 13939 / DSM 20539 / JCM 16871 / CCUG 27074 / LMG 4051 / NBRC 15346 / NCIMB 9279 / VKM B-1422 / R1).